The chain runs to 296 residues: Glycine N-acyltransferase (296 aa).

N6-acetyllysine; alternate occurs at positions 16, 127, and 141. K16, K127, and K141 each carry N6-succinyllysine; alternate. N6-acetyllysine is present on K159. At K169 the chain carries N6-succinyllysine. N6-acetyllysine; alternate is present on residues K183 and K256. N6-succinyllysine; alternate occurs at positions 183 and 256.

It belongs to the glycine N-acyltransferase family. As to expression, predominantly expressed in liver (at protein level) and kidney. Down-regulated in hepatocellular carcinoma and other liver cancers.

Its subcellular location is the mitochondrion. It catalyses the reaction an acyl-CoA + glycine = an N-acylglycine + CoA + H(+). The enzyme catalyses benzoyl-CoA + glycine = N-benzoylglycine + CoA + H(+). In terms of biological role, mitochondrial acyltransferase which transfers an acyl group to the N-terminus of glycine and glutamine, although much less efficiently. Can conjugate numerous substrates to form a variety of N-acylglycines, with a preference for benzoyl-CoA over phenylacetyl-CoA as acyl donors. Thereby detoxify xenobiotics, such as benzoic acid or salicylic acid, and endogenous organic acids, such as isovaleric acid. This chain is Glycine N-acyltransferase (GLYAT), found in Homo sapiens (Human).